The following is a 495-amino-acid chain: UDP-N-acetylmuramoyl-L-alanyl-D-glutamate--2,6-diaminopimelate ligase (495 aa).

Residue serine 29 coordinates UDP-N-acetyl-alpha-D-muramoyl-L-alanyl-D-glutamate. Residue glycine 111–serine 117 coordinates ATP. UDP-N-acetyl-alpha-D-muramoyl-L-alanyl-D-glutamate contacts are provided by residues threonine 153–threonine 154, serine 180, glutamine 186, and arginine 188. Lysine 220 carries the N6-carboxylysine modification. Residues arginine 384, aspartate 408–arginine 411, glycine 459, and glutamate 463 contribute to the meso-2,6-diaminopimelate site. The short motif at aspartate 408–arginine 411 is the Meso-diaminopimelate recognition motif element.

This sequence belongs to the MurCDEF family. MurE subfamily. The cofactor is Mg(2+). In terms of processing, carboxylation is probably crucial for Mg(2+) binding and, consequently, for the gamma-phosphate positioning of ATP.

It is found in the cytoplasm. The enzyme catalyses UDP-N-acetyl-alpha-D-muramoyl-L-alanyl-D-glutamate + meso-2,6-diaminopimelate + ATP = UDP-N-acetyl-alpha-D-muramoyl-L-alanyl-gamma-D-glutamyl-meso-2,6-diaminopimelate + ADP + phosphate + H(+). It functions in the pathway cell wall biogenesis; peptidoglycan biosynthesis. In terms of biological role, catalyzes the addition of meso-diaminopimelic acid to the nucleotide precursor UDP-N-acetylmuramoyl-L-alanyl-D-glutamate (UMAG) in the biosynthesis of bacterial cell-wall peptidoglycan. This chain is UDP-N-acetylmuramoyl-L-alanyl-D-glutamate--2,6-diaminopimelate ligase, found in Xylella fastidiosa (strain 9a5c).